We begin with the raw amino-acid sequence, 329 residues long: Glycerol-3-phosphate dehydrogenase [NAD(P)+] (329 aa).

NADPH is bound by residues Trp-15, His-35, and Lys-107. Sn-glycerol 3-phosphate-binding residues include Lys-107, Gly-135, and Ser-137. Residue Ala-139 coordinates NADPH. Lys-190, Asp-243, Ser-253, Arg-254, and Asn-255 together coordinate sn-glycerol 3-phosphate. Lys-190 acts as the Proton acceptor in catalysis. An NADPH-binding site is contributed by Arg-254. NADPH contacts are provided by Leu-276 and Glu-278.

It belongs to the NAD-dependent glycerol-3-phosphate dehydrogenase family.

It localises to the cytoplasm. The catalysed reaction is sn-glycerol 3-phosphate + NAD(+) = dihydroxyacetone phosphate + NADH + H(+). It catalyses the reaction sn-glycerol 3-phosphate + NADP(+) = dihydroxyacetone phosphate + NADPH + H(+). It participates in membrane lipid metabolism; glycerophospholipid metabolism. Catalyzes the reduction of the glycolytic intermediate dihydroxyacetone phosphate (DHAP) to sn-glycerol 3-phosphate (G3P), the key precursor for phospholipid synthesis. This is Glycerol-3-phosphate dehydrogenase [NAD(P)+] from Rhodopseudomonas palustris (strain HaA2).